The chain runs to 257 residues: Chymotrypsin-like elastase family member 3B (257 aa).

The segment at residues 1 to 2 is a signal peptide (or 3); sequence VA. Residues 3–15 constitute a propeptide, activation peptide; sequence SGYGPPSSHPSSR. Residues 16 to 255 enclose the Peptidase S1 domain; it reads VVNGEDAVPY…FIDWIEETIA (240 aa). The N-linked (GlcNAc...) asparagine glycan is linked to Asn-38. Disulfide bonds link Cys-45–Cys-61 and Cys-104–Cys-107. His-60 serves as the catalytic Charge relay system. Asp-110 (charge relay system) is an active-site residue. Intrachain disulfides connect Cys-144-Cys-210, Cys-175-Cys-191, and Cys-200-Cys-231. Catalysis depends on Ser-204, which acts as the Charge relay system.

Belongs to the peptidase S1 family. Elastase subfamily.

The enzyme catalyses Preferential cleavage: Ala-|-Xaa. Does not hydrolyze elastin.. Functionally, efficient protease with alanine specificity but only little elastolytic activity. The protein is Chymotrypsin-like elastase family member 3B (CELA3B) of Macaca mulatta (Rhesus macaque).